The sequence spans 329 residues: MSLNVKLHPSGIIFTSDGTSTILDAALDSNIHIEYSCKDGTCGSCKAILISGEVDSAENTFLTEEDVAKGAILTCCSKAKSDIELDVNYYPELSHIQKKTYPCKLDSIEFVGEDIAILSLRLPPTAKIQYLAGQYIDLIINGQRRSYSIANAPGGNGNIELHVRKVVNGVFSNIIFNELKLQQLLRIEGPQGTFFVREDNLPIVFLAGGTGFAPVKSMVEALINKNDQRQVHIYWGMPAGHNFYSDIANEWAIKHPNIHYVPVVSGDDSTWTGATGFVHQAVLEDIPDLSLFNVYACGSLAMITAARNDFINHGLAENKFFSDAFVPSK.

The 92-residue stretch at 2–93 folds into the 2Fe-2S ferredoxin-type domain; sequence SLNVKLHPSG…ELDVNYYPEL (92 aa). The [2Fe-2S] cluster site is built by C37, C42, C45, and C75. The FAD-binding FR-type domain occupies 98 to 197; that stretch reads KKTYPCKLDS…EGPQGTFFVR (100 aa).

As to quaternary structure, monomer.

It participates in nucleotide-sugar biosynthesis; CDP-ascarylose biosynthesis. Its pathway is bacterial outer membrane biogenesis; lipopolysaccharide biosynthesis. Participates in the conversion of CDP-6-deoxy-D-glycero-L-threo-4-hexulose to 3,6-dideoxy-D-glycero-D-glycero-4-hexulose together with CDP-6-deoxy-D-glycero-L-threo-4-hexulose-3-dehydrase (E1) in two consecutive steps. The detailed mechanism of E3 is not yet resolved. This Yersinia pseudotuberculosis serotype I (strain IP32953) protein is CDP-6-deoxy-L-threo-D-glycero-4-hexulose-3-dehydrase reductase (ascD).